The chain runs to 458 residues: Argininosuccinate lyase (458 aa).

The protein belongs to the lyase 1 family. Argininosuccinate lyase subfamily.

The protein localises to the cytoplasm. It catalyses the reaction 2-(N(omega)-L-arginino)succinate = fumarate + L-arginine. The protein operates within amino-acid biosynthesis; L-arginine biosynthesis; L-arginine from L-ornithine and carbamoyl phosphate: step 3/3. The protein is Argininosuccinate lyase of Salmonella dublin (strain CT_02021853).